The primary structure comprises 90 residues: Acylphosphatase (90 aa).

The Acylphosphatase-like domain maps to 4–90 (TRRVRFYGRV…TEFQDFQIKR (87 aa)). Catalysis depends on residues Arg-19 and Asn-37.

It belongs to the acylphosphatase family.

The catalysed reaction is an acyl phosphate + H2O = a carboxylate + phosphate + H(+). This Thermoplasma volcanium (strain ATCC 51530 / DSM 4299 / JCM 9571 / NBRC 15438 / GSS1) protein is Acylphosphatase (acyP).